The primary structure comprises 142 residues: Deoxyuridine 5'-triphosphate nucleotidohydrolase (142 aa).

The protein belongs to the dUTPase family. Mg(2+) is required as a cofactor.

It catalyses the reaction dUTP + H2O = dUMP + diphosphate + H(+). This enzyme is involved in nucleotide metabolism: it produces dUMP, the immediate precursor of thymidine nucleotides and it decreases the intracellular concentration of dUTP so that uracil cannot be incorporated into DNA. This chain is Deoxyuridine 5'-triphosphate nucleotidohydrolase (DUT), found in Swinepox virus (strain Kasza) (SWPV).